The following is a 558-amino-acid chain: Glucose-6-phosphate isomerase (558 aa).

E363 acts as the Proton donor in catalysis. Active-site residues include H394 and K522.

The protein belongs to the GPI family.

It is found in the cytoplasm. It carries out the reaction alpha-D-glucose 6-phosphate = beta-D-fructose 6-phosphate. It functions in the pathway carbohydrate biosynthesis; gluconeogenesis. The protein operates within carbohydrate degradation; glycolysis; D-glyceraldehyde 3-phosphate and glycerone phosphate from D-glucose: step 2/4. Functionally, catalyzes the reversible isomerization of glucose-6-phosphate to fructose-6-phosphate. This Blochmanniella floridana protein is Glucose-6-phosphate isomerase.